A 434-amino-acid polypeptide reads, in one-letter code: Trigger factor (434 aa).

Residues Glu161–Pro246 enclose the PPIase FKBP-type domain.

It belongs to the FKBP-type PPIase family. Tig subfamily.

The protein resides in the cytoplasm. The catalysed reaction is [protein]-peptidylproline (omega=180) = [protein]-peptidylproline (omega=0). Involved in protein export. Acts as a chaperone by maintaining the newly synthesized protein in an open conformation. Functions as a peptidyl-prolyl cis-trans isomerase. In Pectobacterium atrosepticum (strain SCRI 1043 / ATCC BAA-672) (Erwinia carotovora subsp. atroseptica), this protein is Trigger factor.